Consider the following 125-residue polypeptide: Large ribosomal subunit protein bL12 (125 aa).

The interval 95 to 125 (APKPIKEGVDKKTAEEAKKKLEEAGAKAELK) is disordered.

Belongs to the bacterial ribosomal protein bL12 family. In terms of assembly, homodimer. Part of the ribosomal stalk of the 50S ribosomal subunit. Forms a multimeric L10(L12)X complex, where L10 forms an elongated spine to which 2 to 4 L12 dimers bind in a sequential fashion. Binds GTP-bound translation factors.

Forms part of the ribosomal stalk which helps the ribosome interact with GTP-bound translation factors. Is thus essential for accurate translation. This is Large ribosomal subunit protein bL12 from Polynucleobacter necessarius subsp. necessarius (strain STIR1).